A 235-amino-acid chain; its full sequence is Ion-translocating oxidoreductase complex subunit E (235 aa).

The next 5 membrane-spanning stretches (helical) occupy residues 63-83 (LGLS…ISLF), 93-113 (IPIY…LMNA), 117-137 (TLYQ…IIIG), 152-172 (IWDG…LGAL), and 206-226 (SFLL…LLAI).

It belongs to the NqrDE/RnfAE family. In terms of assembly, the complex is composed of six subunits: RnfA, RnfB, RnfC, RnfD, RnfE and RnfG.

The protein resides in the cell inner membrane. Its function is as follows. Part of a membrane-bound complex that couples electron transfer with translocation of ions across the membrane. The polypeptide is Ion-translocating oxidoreductase complex subunit E (Haemophilus influenzae (strain PittEE)).